The following is a 267-amino-acid chain: Octanoyltransferase (267 aa).

Positions 77–265 constitute a BPL/LPL catalytic domain; the sequence is GTASELVWLV…AFESVFGPRQ (189 aa). Substrate is bound by residues 116 to 123, 196 to 198, and 209 to 211; these read RGGEYTYH, AIG, and GIA. Residue Cys-227 is the Acyl-thioester intermediate of the active site.

It belongs to the LipB family.

It localises to the cytoplasm. The enzyme catalyses octanoyl-[ACP] + L-lysyl-[protein] = N(6)-octanoyl-L-lysyl-[protein] + holo-[ACP] + H(+). It functions in the pathway protein modification; protein lipoylation via endogenous pathway; protein N(6)-(lipoyl)lysine from octanoyl-[acyl-carrier-protein]: step 1/2. In terms of biological role, catalyzes the transfer of endogenously produced octanoic acid from octanoyl-acyl-carrier-protein onto the lipoyl domains of lipoate-dependent enzymes. Lipoyl-ACP can also act as a substrate although octanoyl-ACP is likely to be the physiological substrate. The polypeptide is Octanoyltransferase (Brucella suis biovar 1 (strain 1330)).